Reading from the N-terminus, the 272-residue chain is Cytosolic Fe-S cluster assembly factor NUBP2 (272 aa).

23–30 (GKGGVGKS) is an ATP binding site. [4Fe-4S] cluster-binding residues include Cys197 and Cys200.

It belongs to the Mrp/NBP35 ATP-binding proteins family. NUBP2/CFD1 subfamily. In terms of assembly, heterotetramer of 2 NUBP1 and 2 NUBP2 chains. [4Fe-4S] cluster is required as a cofactor.

The protein resides in the cytoplasm. In terms of biological role, component of the cytosolic iron-sulfur (Fe/S) protein assembly (CIA) machinery. Required for maturation of extramitochondrial Fe-S proteins. The NUBP1-NUBP2 heterotetramer forms a Fe-S scaffold complex, mediating the de novo assembly of an Fe-S cluster and its transfer to target apoproteins. This chain is Cytosolic Fe-S cluster assembly factor NUBP2, found in Gallus gallus (Chicken).